The following is a 423-amino-acid chain: Methanol:N,N-dimethyl-4-nitrosoaniline oxidoreductase (423 aa).

Belongs to the iron-containing alcohol dehydrogenase family. In terms of assembly, homodecamer. The cofactor is Mg(2+). It depends on Zn(2+) as a cofactor. NADPH is required as a cofactor.

The enzyme catalyses methanol + A = formaldehyde + AH2. In terms of biological role, catalyzes the oxidation of methanol to yield formaldehyde. While the in vivo electron acceptor is not known, N,N-dimethyl-4-nitrosoaniline (NDMA) can serve this function in vitro and is reduced to 4-(hydroxylamino)-N,N-dimethylaniline. This Rhodococcus erythropolis (Arthrobacter picolinophilus) protein is Methanol:N,N-dimethyl-4-nitrosoaniline oxidoreductase (thcE).